The following is a 449-amino-acid chain: MGVFDYKNLGTEASKTLFADATAITLYTYHNLDNGFAVGYQQHGLGLGCRHTGRGVARQHRLPGSDPPAFPGILTRKRPPWTRCTQPVGRQSSASALGYGGKVDARGTFFGEKAGYTTAQAEVLGKYDDAGKLLEIGIGFRGTSGPRESLITTPCRSGQRPARRAGPQGLCEKLCRRTFGGLLKTVADYAGAHGLSGKDVLVSGHSLGGLAVNSMADLSTSKWAGFYKDANYLAYASPTQSAGDKVLNIGYENDPVFRALDGSTFNLSSLGVHDKAHESTTDNIVSFNDHYASTLWNVLPFSIANLSTWVSHLPSAYGDGMTRVLESGFYEQMTRDSTIILCPTWSDPARANTWVQDLNRNAEPHTGNTFIIGSDGNDLIQGGKGADFIEGGKGNDTIRDNSGHNTFLFSGHFGQDRIIGYQPTGWCSRAPTAAPTCATTRRPWGPIRC.

The N-terminal stretch at 1-23 is a signal peptide; that stretch reads MGVFDYKNLGTEASKTLFADATA. The interval 58–77 is disordered; the sequence is RQHRLPGSDPPAFPGILTRK. Catalysis depends on S206, which acts as the Charge relay system. Residues G318, D387, and D396 each coordinate Ca(2+). Hemolysin-type calcium-binding repeat units lie at residues 372-389 and 390-407; these read IGSD…ADFI and EGGK…HNTF.

Belongs to the AB hydrolase superfamily. Lipase family.

It catalyses the reaction a triacylglycerol + H2O = a diacylglycerol + a fatty acid + H(+). The sequence is that of Lipase from Pseudomonas fluorescens.